The sequence spans 304 residues: Elongation factor Ts (304 aa).

Residues 82–85 (TDFV) are involved in Mg(2+) ion dislocation from EF-Tu.

Belongs to the EF-Ts family.

The protein resides in the cytoplasm. Functionally, associates with the EF-Tu.GDP complex and induces the exchange of GDP to GTP. It remains bound to the aminoacyl-tRNA.EF-Tu.GTP complex up to the GTP hydrolysis stage on the ribosome. This is Elongation factor Ts from Symbiobacterium thermophilum (strain DSM 24528 / JCM 14929 / IAM 14863 / T).